We begin with the raw amino-acid sequence, 559 residues long: Acetolactate synthase, catabolic (559 aa).

Residues R159, 263-284, and 304-323 each bind FAD; these read FNNQ…IGYS and DVLP…LVGD. D447 is a binding site for Mg(2+).

The protein belongs to the TPP enzyme family. As to quaternary structure, homodimer.

The catalysed reaction is 2 pyruvate + H(+) = (2S)-2-acetolactate + CO2. Its pathway is polyol metabolism; (R,R)-butane-2,3-diol biosynthesis; (R,R)-butane-2,3-diol from pyruvate: step 1/3. The protein is Acetolactate synthase, catabolic (budB) of Raoultella terrigena (Klebsiella terrigena).